The following is a 138-amino-acid chain: Class I hydrophobin 3 (138 aa).

Residues 1–16 (MRFFLAITALVAAVTA) form the signal peptide. 4 cysteine pairs are disulfide-bonded: Cys-40–Cys-111, Cys-48–Cys-105, Cys-49–Cys-87, and Cys-112–Cys-130.

Belongs to the fungal hydrophobin family. Self-assembles to form functional amyloid fibrils called rodlets. Self-assembly into fibrillar rodlets occurs spontaneously at hydrophobic:hydrophilic interfaces and the rodlets further associate laterally to form amphipathic monolayers.

Its subcellular location is the secreted. It is found in the cell wall. Functionally, aerial growth, conidiation, and dispersal of filamentous fungi in the environment rely upon a capability of their secreting small amphipathic proteins called hydrophobins (HPBs) with low sequence identity. Class I can self-assemble into an outermost layer of rodlet bundles on aerial cell surfaces, conferring cellular hydrophobicity that supports fungal growth, development and dispersal; whereas Class II form highly ordered films at water-air interfaces through intermolecular interactions but contribute nothing to the rodlet structure. HYD3 is a class I hydrophobin that contributes to the formation of aerial hyphae and fruiting bodies. The protein is Class I hydrophobin 3 of Cordyceps militaris (Caterpillar fungus).